A 3674-amino-acid chain; its full sequence is Spectrin beta chain, non-erythrocytic 5 (3674 aa).

A disordered region spans residues 1-37; it reads MAGQPHSPRELLGAAGHRSRRPSTELRVPPSPSLTMD. The interval 1–279 is actin-binding; sequence MAGQPHSPRE…IMTYVSLYYH (279 aa). 2 Calponin-homology (CH) domains span residues 54 to 159 and 177 to 282; these read QMQE…LRFQ and LSTK…HYCS. 8 Spectrin repeats span residues 307–416, 428–529, 642–742, 747–810, 900–996, 1103–1206, 1209–1311, and 1315–1417; these read LQTQ…ALQQ, ARRF…RKQV, AEFL…ARLQ, VLQY…QGRA, GFCS…AVQL, ARQS…WLQE, ELQK…RQLL, and QLQE…ELQQ. The tract at residues 1441–1469 is disordered; that stretch reads ALQSSETGQDLRSSQRLQKRHQQLESESR. Positions 1442-1456 are enriched in polar residues; that stretch reads LQSSETGQDLRSSQR. Spectrin repeat units follow at residues 1521-1624, 1628-1727, 1731-1835, 1842-1940, 1944-2046, 2052-2146, 2150-2253, 2256-2361, 2366-2467, 2471-2574, 2577-2680, 2683-2784, 2791-2890, 2894-2997, 3000-3103, 3106-3209, 3213-3311, 3318-3415, and 3422-3488; these read ELHQ…CLQQ, FQQY…RELE, RLHE…ALRD, VHRD…AQLE, LLAR…ERLQ, QLFL…HALH, LMAS…ELED, NFLE…QQLE, IHVL…EALD, QAQK…QLQQ, ELQL…RLEE, QLQA…AKLQ, RLRR…TALE, LLLK…LLQQ, EAQQ…GLQE, QLHQ…ENLA, EVHS…QWLA, AFLG…RWQR, and LQKL…EQEL. The PH domain occupies 3533 to 3641; that stretch reads TPTMEGSLEF…WWRALGSTAA (109 aa).

It belongs to the spectrin family. In terms of assembly, probably associates with an alpha chain. Interacts (via C-terminus) with TRPC4. As to expression, expressed at very low levels in many tissues, with strongest expression in cerebellum, spinal cord, stomach, pituitary gland, liver, pancreas, salivary gland, kidney, bladder, and heart.

The protein localises to the cytoplasm. It is found in the cytoskeleton. The polypeptide is Spectrin beta chain, non-erythrocytic 5 (SPTBN5) (Homo sapiens (Human)).